Here is a 490-residue protein sequence, read N- to C-terminus: GTPase Der (490 aa).

2 consecutive EngA-type G domains span residues 3-166 (PVVA…MEDL) and 203-376 (IKLA…DSST). GTP contacts are provided by residues 9–16 (GRPNVGKS), 56–60 (DTGGI), 118–121 (NKTD), 209–216 (GRPNVGKS), 256–260 (DTAGV), and 321–324 (NKWD). In terms of domain architecture, KH-like spans 377–461 (RRVGTSMLTR…PIRIQFKEGE (85 aa)).

The protein belongs to the TRAFAC class TrmE-Era-EngA-EngB-Septin-like GTPase superfamily. EngA (Der) GTPase family. Associates with the 50S ribosomal subunit.

Functionally, GTPase that plays an essential role in the late steps of ribosome biogenesis. The polypeptide is GTPase Der (Escherichia coli O127:H6 (strain E2348/69 / EPEC)).